Here is a 1510-residue protein sequence, read N- to C-terminus: Chromosome partition protein MukB (1510 aa).

A coiled-coil region spans residues 6 to 30 (ELENEIELESDEVIMENENVEEIVD). 75 to 82 (GGNGAGKS) provides a ligand contact to ATP. Coiled-coil stretches lie at residues 346–506 (QHRL…HKMS), 553–611 (QQTP…EDIS), 673–706 (MQSQ…RLSQ), 821–846 (SAAR…AQIA), 876–1064 (EALM…IQLQ), 1094–1149 (ERAR…RELV), and 1249–1304 (DAIE…LQNI). Residues 707 to 824 (PDGSEDPRLN…EIPLFGSAAR (118 aa)) form a flexible hinge region.

It belongs to the SMC family. MukB subfamily. As to quaternary structure, homodimerization via its hinge domain. Binds to DNA via its C-terminal region. Interacts, and probably forms a ternary complex, with MukE and MukF via its C-terminal region. The complex formation is stimulated by calcium or magnesium. Interacts with tubulin-related protein FtsZ.

It localises to the cytoplasm. Its subcellular location is the nucleoid. Functionally, plays a central role in chromosome condensation, segregation and cell cycle progression. Functions as a homodimer, which is essential for chromosome partition. Involved in negative DNA supercoiling in vivo, and by this means organize and compact chromosomes. May achieve or facilitate chromosome segregation by condensation DNA from both sides of a centrally located replisome during cell division. In Haemophilus influenzae (strain PittGG), this protein is Chromosome partition protein MukB.